The chain runs to 384 residues: Isoafricanol synthase (384 aa).

Mg(2+) is bound by residues Asp-95, Asn-245, Ser-249, and Glu-253.

It belongs to the terpene synthase family. It depends on Mg(2+) as a cofactor.

It carries out the reaction (2E,6E)-farnesyl diphosphate + H2O = (+)-isoafricanol + diphosphate. Its function is as follows. Catalyzes the cyclization of farnesyl diphosphate (FPP) to isoafricanol. This chain is Isoafricanol synthase, found in Streptomyces violaceusniger (strain Tu 4113).